Reading from the N-terminus, the 116-residue chain is Ribosome-binding factor A (116 aa).

It belongs to the RbfA family. Monomer. Binds 30S ribosomal subunits, but not 50S ribosomal subunits or 70S ribosomes.

The protein resides in the cytoplasm. One of several proteins that assist in the late maturation steps of the functional core of the 30S ribosomal subunit. Associates with free 30S ribosomal subunits (but not with 30S subunits that are part of 70S ribosomes or polysomes). Required for efficient processing of 16S rRNA. May interact with the 5'-terminal helix region of 16S rRNA. The sequence is that of Ribosome-binding factor A from Pediococcus pentosaceus (strain ATCC 25745 / CCUG 21536 / LMG 10740 / 183-1w).